The sequence spans 165 residues: Bacterial non-heme ferritin (165 aa).

The Ferritin-like diiron domain occupies 1–145 (MLKPEMIEKL…SIIDKLSLAG (145 aa)). Glu17, Glu49, Glu50, His53, Glu94, Glu126, Gln127, and Glu130 together coordinate Fe cation.

It belongs to the ferritin family. Prokaryotic subfamily. In terms of assembly, homooligomer of 24 subunits that assemble into a spherical protein shell (12 +/- 1 nM diameter) that can sequester at least 2000 iron atoms.

The protein resides in the cytoplasm. The catalysed reaction is 4 Fe(2+) + O2 + 6 H2O = 4 iron(III) oxide-hydroxide + 12 H(+). Functionally, iron-storage protein. This is Bacterial non-heme ferritin (ftnA) from Escherichia coli O157:H7.